The sequence spans 179 residues: Ubiquinol-cytochrome c reductase iron-sulfur subunit (179 aa).

The chain crosses the membrane as a helical span at residues 14–35 (FLYVATAAVGAAGVAAVAWPFI). A Rieske domain is found at 80–173 (AKEIQSEEAA…YEFVDNTKIR (94 aa)). Residues Cys-118, His-120, Cys-137, and His-140 each contribute to the [2Fe-2S] cluster site. A disulfide bridge connects residues Cys-123 and Cys-139.

This sequence belongs to the Rieske iron-sulfur protein family. As to quaternary structure, the main subunits of complex b-c1 are: cytochrome b, cytochrome c1 and the Rieske protein. It depends on [2Fe-2S] cluster as a cofactor.

It localises to the cell membrane. The enzyme catalyses a quinol + 2 Fe(III)-[cytochrome c](out) = a quinone + 2 Fe(II)-[cytochrome c](out) + 2 H(+)(out). Its function is as follows. Component of the ubiquinol-cytochrome c reductase complex (complex III or cytochrome b-c1 complex), which is a respiratory chain that generates an electrochemical potential coupled to ATP synthesis. This chain is Ubiquinol-cytochrome c reductase iron-sulfur subunit (petA), found in Blastochloris viridis (Rhodopseudomonas viridis).